We begin with the raw amino-acid sequence, 84 residues long: Putative lipoprotein RzoQ (84 aa).

The first 22 residues, 1-22 (MRNRNLLKFLPGLLICLIVLTS), serve as a signal peptide directing secretion. Residue Cys23 is the site of N-palmitoyl cysteine attachment. Cys23 is lipidated: S-diacylglycerol cysteine.

It localises to the cell membrane. The protein is Putative lipoprotein RzoQ (rzoQ) of Escherichia coli (strain K12).